A 633-amino-acid polypeptide reads, in one-letter code: Shootin-1 (633 aa).

Methionine 1 carries the post-translational modification N-acetylmethionine. Phosphoserine occurs at positions 3 and 4. A coiled-coil region spans residues 7-353; it reads EKQLQLITSL…RVNQSENSVP (347 aa). Phosphoserine; by PAK1 occurs at positions 101 and 249. Residues 343–508 are disordered; it reads KRVNQSENSV…LATSESKSMP (166 aa). Over residues 352–369 the composition is skewed to pro residues; that stretch reads VPPPPPPPPPLPPPPPNP. Serine 375 bears the Phosphoserine mark. Over residues 403–418 the composition is skewed to basic and acidic residues; the sequence is TDLKRQAVEEMMDRIK. Over residues 456-465 the composition is skewed to polar residues; sequence LNKSTSSRSL. Phosphoserine is present on serine 473. Residue threonine 487 is modified to Phosphothreonine. Polar residues predominate over residues 490-505; that stretch reads ADSSSPTGILATSESK. Serine 494 carries the post-translational modification Phosphoserine. A Phosphothreonine modification is found at threonine 496. A phosphoserine mark is found at serine 506 and serine 515. The tract at residues 525–633 is disordered; that stretch reads TLEAEFNNPC…KTGETDSSNC (109 aa). Phosphothreonine is present on threonine 537. Residues 550-559 show a composition bias toward polar residues; that stretch reads CTNSKVTFQP. Positions 590 to 621 are enriched in basic and acidic residues; the sequence is PQTKDQAAEKDPTQCKEEERGETQPEFKEDSS.

The protein belongs to the shootin family. In terms of assembly, interacts with PFN2. Interacts (via N-terminus) with KIF20B; this interaction is direct and promotes the association of SHTN1 to microtubules in primary neurons. Associates with microtubule. Interacts with L1CAM; this interaction occurs in axonal growth cones. Interacts with actin filament retrograde flow; this interaction is enhanced in a netrin-1- and PAK1-dependent manner and promotes F-actin-substrate coupling and concomitant formation of traction forces at axonal growth cones. Interacts with RUFY3. Phosphorylated on Ser-101 and Ser-249 by PAK1 through a CDC42- and RAC1-dependent signaling pathway, which enhances its association with F-actin retrograde flow in filopodia and lamellipodia of axonal growth cones. Phosphorylation on Ser-101 and Ser-249 is increased by netrin-1. As to expression, brain-specific (at protein level). Expressed in hippocampal neurons.

It is found in the perikaryon. The protein localises to the cell projection. It localises to the axon. Its subcellular location is the growth cone. The protein resides in the cytoplasm. It is found in the cytoskeleton. The protein localises to the filopodium. It localises to the lamellipodium. Its function is as follows. Involved in the generation of internal asymmetric signals required for neuronal polarization and neurite outgrowth. Mediates netrin-1-induced F-actin-substrate coupling or 'clutch engagement' within the axon growth cone through activation of CDC42, RAC1 and PAK1-dependent signaling pathway, thereby converting the F-actin retrograde flow into traction forces, concomitantly with filopodium extension and axon outgrowth. Plays a role in cytoskeletal organization by regulating the subcellular localization of phosphoinositide 3-kinase (PI3K) activity at the axonal growth cone. Also plays a role in regenerative neurite outgrowth. In the developing cortex, cooperates with KIF20B to promote both the transition from the multipolar to the bipolar stage and the radial migration of cortical neurons from the ventricular zone toward the superficial layer of the neocortex. Involved in the accumulation of phosphatidylinositol 3,4,5-trisphosphate (PIP3) in the growth cone of primary hippocampal neurons. This Rattus norvegicus (Rat) protein is Shootin-1.